Here is a 373-residue protein sequence, read N- to C-terminus: Phosphoserine aminotransferase (373 aa).

Arg46 contributes to the L-glutamate binding site. Residues Phe104, Thr150, Asp172, and Gln195 each contribute to the pyridoxal 5'-phosphate site. The residue at position 196 (Lys196) is an N6-(pyridoxal phosphate)lysine. A pyridoxal 5'-phosphate-binding site is contributed by 247 to 248 (NT).

Belongs to the class-V pyridoxal-phosphate-dependent aminotransferase family. SerC subfamily. Homodimer. It depends on pyridoxal 5'-phosphate as a cofactor.

It localises to the cytoplasm. The enzyme catalyses O-phospho-L-serine + 2-oxoglutarate = 3-phosphooxypyruvate + L-glutamate. It catalyses the reaction 4-(phosphooxy)-L-threonine + 2-oxoglutarate = (R)-3-hydroxy-2-oxo-4-phosphooxybutanoate + L-glutamate. Its pathway is amino-acid biosynthesis; L-serine biosynthesis; L-serine from 3-phospho-D-glycerate: step 2/3. It participates in cofactor biosynthesis; pyridoxine 5'-phosphate biosynthesis; pyridoxine 5'-phosphate from D-erythrose 4-phosphate: step 3/5. In terms of biological role, catalyzes the reversible conversion of 3-phosphohydroxypyruvate to phosphoserine and of 3-hydroxy-2-oxo-4-phosphonooxybutanoate to phosphohydroxythreonine. This chain is Phosphoserine aminotransferase, found in Rhodococcus opacus (strain B4).